A 445-amino-acid chain; its full sequence is Trigger factor (445 aa).

The region spanning 168–253 is the PPIase FKBP-type domain; the sequence is GDAVIVDFVG…IHEVRAPQTP (86 aa).

The protein belongs to the FKBP-type PPIase family. Tig subfamily.

Its subcellular location is the cytoplasm. The catalysed reaction is [protein]-peptidylproline (omega=180) = [protein]-peptidylproline (omega=0). Involved in protein export. Acts as a chaperone by maintaining the newly synthesized protein in an open conformation. Functions as a peptidyl-prolyl cis-trans isomerase. This is Trigger factor from Hyphomonas neptunium (strain ATCC 15444).